The following is an 880-amino-acid chain: DNA double-strand break repair Rad50 ATPase (880 aa).

ATP contacts are provided by residues Arg-12, Asn-32 to Ser-38, and Gln-138. Coiled coils occupy residues Gly-225–Glu-336 and Gly-391–Asn-744. The Zinc-hook domain occupies Leu-397–Arg-494. Cys-442 and Cys-445 together coordinate Zn(2+). Phe-789 to Glu-794 lines the ATP pocket.

Belongs to the SMC family. RAD50 subfamily. In terms of assembly, homodimer. Forms a heterotetramer composed of two Mre11 subunits and two Rad50 subunits. Zn(2+) is required as a cofactor.

In terms of biological role, part of the Rad50/Mre11 complex, which is involved in the early steps of DNA double-strand break (DSB) repair. The complex may facilitate opening of the processed DNA ends to aid in the recruitment of HerA and NurA. Rad50 controls the balance between DNA end bridging and DNA resection via ATP-dependent structural rearrangements of the Rad50/Mre11 complex. The polypeptide is DNA double-strand break repair Rad50 ATPase (Pyrococcus abyssi (strain GE5 / Orsay)).